Consider the following 62-residue polypeptide: Large ribosomal subunit protein bL28 (62 aa).

Positions 1–23 are disordered; the sequence is MARRCFVTGKSAKAGNARSHSMR.

This sequence belongs to the bacterial ribosomal protein bL28 family.

In Brevibacillus brevis (strain 47 / JCM 6285 / NBRC 100599), this protein is Large ribosomal subunit protein bL28.